The sequence spans 107 residues: Phosphoribosyl-ATP pyrophosphatase (107 aa).

This sequence belongs to the PRA-PH family.

The protein resides in the cytoplasm. The catalysed reaction is 1-(5-phospho-beta-D-ribosyl)-ATP + H2O = 1-(5-phospho-beta-D-ribosyl)-5'-AMP + diphosphate + H(+). It functions in the pathway amino-acid biosynthesis; L-histidine biosynthesis; L-histidine from 5-phospho-alpha-D-ribose 1-diphosphate: step 2/9. This chain is Phosphoribosyl-ATP pyrophosphatase, found in Rhizobium etli (strain CIAT 652).